A 95-amino-acid chain; its full sequence is Small ribosomal subunit protein bS6 (95 aa).

The protein belongs to the bacterial ribosomal protein bS6 family.

Binds together with bS18 to 16S ribosomal RNA. This Geobacillus sp. (strain WCH70) protein is Small ribosomal subunit protein bS6.